A 717-amino-acid chain; its full sequence is DNA polymerase iota (717 aa).

The segment at 1-22 is disordered; sequence MEPLHAGAAGSSRAVCSQGPPT. Positions 30-243 constitute a UmuC domain; that stretch reads IVHVDLDCFY…NHIKEIPGIG (214 aa). The Mg(2+) site is built by Asp34 and Leu35. Residues Tyr39 and Arg71 each contribute to the a 2'-deoxyribonucleoside 5'-triphosphate site. Residue Asp126 coordinates Mg(2+). Glu127 serves as the catalytic Proton acceptor. 2 DNA-binding regions span residues 300–307 and 343–360; these read QSFSEEDT and RLVI…ESRQ. The short motif at 500–517 is the Ubiquitin-binding 1 (UBM1) element; the sequence is VDQEVFKQLPADIQEEIL. Disordered stretches follow at residues 549–589, 603–622, and 644–687; these read QMQA…SHPS, KDEQ…FSST, and HRTV…DIDP. Over residues 575-589 the composition is skewed to low complexity; it reads PGTSGLSPGSTSHPS. Polar residues-rich tracts occupy residues 607–622 and 652–662; these read TSQG…FSST and QTATASHQGLE. Over residues 665 to 679 the composition is skewed to basic and acidic residues; it reads QGLESRELDSAEEKL. A Ubiquitin-binding 2 (UBM2) motif is present at residues 685 to 702; it reads IDPQVFYELPEEVQKELM.

This sequence belongs to the DNA polymerase type-Y family. Interacts with POLH. Interacts with REV1. Interacts with ubiquitin. The cofactor is Mg(2+). Mn(2+) is required as a cofactor. In terms of processing, monoubiquitinated. Protein monoubiquitination prevents POLI binding to ubiquitin via the ubiquitin-binding motif 1 and ubiquitin-binding motif 2. Detected in testis, and at very low levels in spleen, lung and brain. Detected in round spermatids, but not in prophase spermatocytes.

Its subcellular location is the nucleus. It catalyses the reaction DNA(n) + a 2'-deoxyribonucleoside 5'-triphosphate = DNA(n+1) + diphosphate. In terms of biological role, error-prone DNA polymerase specifically involved in DNA repair. Plays an important role in translesion synthesis, where the normal high-fidelity DNA polymerases cannot proceed and DNA synthesis stalls. Favors Hoogsteen base-pairing in the active site. Inserts the correct base with high-fidelity opposite an adenosine template. Exhibits low fidelity and efficiency opposite a thymidine template, where it will preferentially insert guanosine. May play a role in hypermutation of immunoglobulin genes. Forms a Schiff base with 5'-deoxyribose phosphate at abasic sites, but may not have lyase activity. This chain is DNA polymerase iota (Poli), found in Mus musculus (Mouse).